We begin with the raw amino-acid sequence, 376 residues long: PqqA peptide cyclase (376 aa).

A Radical SAM core domain is found at Val-4 to Asp-219. 3 residues coordinate [4Fe-4S] cluster: Cys-18, Cys-22, and Cys-25.

The protein belongs to the radical SAM superfamily. PqqE family. Interacts with PqqD. The interaction is necessary for activity of PqqE. [4Fe-4S] cluster serves as cofactor.

The enzyme catalyses [PQQ precursor protein] + S-adenosyl-L-methionine = E-Y cross-linked-[PQQ precursor protein] + 5'-deoxyadenosine + L-methionine + H(+). The protein operates within cofactor biosynthesis; pyrroloquinoline quinone biosynthesis. In terms of biological role, catalyzes the cross-linking of a glutamate residue and a tyrosine residue in the PqqA protein as part of the biosynthesis of pyrroloquinoline quinone (PQQ). The chain is PqqA peptide cyclase from Xanthomonas campestris pv. campestris (strain 8004).